The sequence spans 278 residues: Malonyl-[acyl-carrier protein] O-methyltransferase (278 aa).

Belongs to the methyltransferase superfamily.

The catalysed reaction is malonyl-[ACP] + S-adenosyl-L-methionine = malonyl-[ACP] methyl ester + S-adenosyl-L-homocysteine. It functions in the pathway cofactor biosynthesis; biotin biosynthesis. Functionally, converts the free carboxyl group of a malonyl-thioester to its methyl ester by transfer of a methyl group from S-adenosyl-L-methionine (SAM). It allows to synthesize pimeloyl-ACP via the fatty acid synthetic pathway. The polypeptide is Malonyl-[acyl-carrier protein] O-methyltransferase (Brevibacillus brevis (strain 47 / JCM 6285 / NBRC 100599)).